Reading from the N-terminus, the 55-residue chain is Eclosion hormone (55 aa).

The protein belongs to the insect eclosion hormone family.

The protein localises to the secreted. Functionally, neuropeptide that triggers the performance of ecdysis behaviors at the end of a molt. It triggers adult behavior patterns: larval, pupal and adult ecdysis, and plasticization during the molt. The polypeptide is Eclosion hormone (Romalea microptera (Eastern lubber grasshopper)).